A 444-amino-acid polypeptide reads, in one-letter code: N-succinylarginine dihydrolase (444 aa).

Residues 19-28 (SGLSVGNIAS), Asn-110, and 137-138 (HR) contribute to the substrate site. Glu-174 is a catalytic residue. Arg-214 contacts substrate. Residue His-250 is part of the active site. Substrate is bound by residues Asp-252 and Asn-362. Cys-368 serves as the catalytic Nucleophile.

It belongs to the succinylarginine dihydrolase family. In terms of assembly, homodimer.

The enzyme catalyses N(2)-succinyl-L-arginine + 2 H2O + 2 H(+) = N(2)-succinyl-L-ornithine + 2 NH4(+) + CO2. The protein operates within amino-acid degradation; L-arginine degradation via AST pathway; L-glutamate and succinate from L-arginine: step 2/5. In terms of biological role, catalyzes the hydrolysis of N(2)-succinylarginine into N(2)-succinylornithine, ammonia and CO(2). In Aliivibrio salmonicida (strain LFI1238) (Vibrio salmonicida (strain LFI1238)), this protein is N-succinylarginine dihydrolase.